A 252-amino-acid polypeptide reads, in one-letter code: Gamma carbonic anhydrase-like 1, mitochondrial (252 aa).

The N-terminal 29 residues, 1–29 (MATSIARLSRRGVTSNLIRRCFAAEAALA), are a transit peptide targeting the mitochondrion. Residues 99-101 (RGD) and 114-115 (QE) each bind substrate. Residue His-120 coordinates Zn(2+). The substrate site is built by Arg-148, Gln-160, and Tyr-227.

The protein belongs to the gamma-class carbonic anhydrase family. In terms of assembly, component of the mitochondrial oxidoreductase respiratory chain complex I; element of the extra matrix-exposed domain, which is attached to the membrane arm of this complex. Interacts with GAMMACA2.

The protein resides in the mitochondrion membrane. In terms of biological role, involved in complex I assembly in mitochondria and respiration. The sequence is that of Gamma carbonic anhydrase-like 1, mitochondrial (GAMMACAL1) from Arabidopsis thaliana (Mouse-ear cress).